The sequence spans 359 residues: Mitochondrial glutathione transporter SLC25A39 (359 aa).

Topologically, residues 1–14 are mitochondrial intermembrane; sequence MDDQDPGGISPLQQ. 3 Solcar repeats span residues 9–151, 159–243, and 253–347; these read ISPL…LKAF, SDLY…VKSW, and TSVG…GKSF. The chain crosses the membrane as a helical span at residues 15-35; it reads MVASGAGAVVTSLFMTPLDVV. The Mitochondrial matrix portion of the chain corresponds to 36-121; the sequence is KVRLQSQRPS…VKIVRHEGTR (86 aa). Residues cysteine 74, cysteine 78, cysteine 88, and cysteine 94 each coordinate [2Fe-2S] cluster. Residues 122–142 traverse the membrane as a helical segment; that stretch reads TLWSGLPATLVMTVPATAIYF. Residues 143 to 164 are Mitochondrial intermembrane-facing; the sequence is TAYDQLKAFLCGQSLTSDLYAP. Residues 165–185 traverse the membrane as a helical segment; it reads MVAGALARMGTVTVVSPLELV. Topologically, residues 186-214 are mitochondrial matrix; sequence RTKLQAQHVSYRELASSVQAAVTQGGWRS. The helical transmembrane segment at 215–235 threads the bilayer; the sequence is LWLGWGPTALRDVPFSALYWF. Over 236-255 the chain is Mitochondrial intermembrane; sequence NYELVKSWLSGLRPKDQTSV. A helical membrane pass occupies residues 256–276; it reads GISFVAGGISGMVAATLTLPF. Residues 277-317 are Mitochondrial matrix-facing; the sequence is DVVKTQRQMSLGAVEAVRVKPPRVDSTWLLLRRIRAESGTR. The helical transmembrane segment at 318 to 338 threads the bilayer; that stretch reads GLFAGFLPRIIKAAPSCAIMI. Residues 339 to 359 are Mitochondrial intermembrane-facing; sequence STYEFGKSFFQRLNQEQPLGR.

It belongs to the mitochondrial carrier (TC 2.A.29) family. In terms of processing, cleaved and degraded by AFG3L2; degradation by AFG3L2 is regulated by the ability of SLC25A39 to bind iron-sulfur. In absence of mitochondrial glutathione, SLC25A39 binds iron-sulfur, preventing cleavage and degradation by AFG3L2. The presence of mitochondrial glutathione prevents iron-sulfur-binding to SLC25A39, promoting cleavage and degradation by AFG3L2. Abundant expression in bone marrow, spleen, testis and kidney.

It is found in the mitochondrion inner membrane. It carries out the reaction glutathione(in) = glutathione(out). With respect to regulation, the activity of SLC25A39 is regulated by levels of mitochondrial glutathione via its ability to bind [2Fe-2S] iron-sulfur cluster. Upon physiological levels of mitochondrial glutathione, glutathione prevents iron-sulfur-binding to SLC25A39 promoting cleavage and degradation by AFG3L2. Upon depletion of mitochondrial glutathione, SLC25A39 binds iron-sulfur, preventing cleavage and degradation by AFG3L2. Mitochondrial transporter required for glutathione import into mitochondria. Glutathione, which plays key roles in oxidative metabolism, is produced exclusively in the cytosol and is imported in many organelles. Mitochondrial glutathione is required for the activity and stability of proteins containing iron-sulfur clusters, as well as erythropoiesis. The protein is Mitochondrial glutathione transporter SLC25A39 of Mus musculus (Mouse).